The chain runs to 99 residues: Bublin coiled-coil protein (99 aa).

The stretch at 34 to 71 (LDQINSCLDDIEERNDALNGKLQELLESNRAARRDFRQ) forms a coiled coil. A compositionally biased stretch (basic and acidic residues) spans 66-78 (RRDFRQQITDHAD). Residues 66-99 (RRDFRQQITDHADLPPPANDDDEDEQSRDAQKKD) are disordered.

It belongs to the UPF0184 (EST00098) family.

It is found in the cell junction. Its subcellular location is the cytoplasm. It localises to the cytoskeleton. Essential for intermediate filament organization in intestinal cells, interacts with intermediate filament and regulates intestinal lumen morphology. The chain is Bublin coiled-coil protein (bbln) from Danio rerio (Zebrafish).